The following is a 261-amino-acid chain: tRNA pseudouridine synthase A (261 aa).

Asp-51 functions as the Nucleophile in the catalytic mechanism. Tyr-109 serves as a coordination point for substrate.

Belongs to the tRNA pseudouridine synthase TruA family. Homodimer.

The catalysed reaction is uridine(38/39/40) in tRNA = pseudouridine(38/39/40) in tRNA. Formation of pseudouridine at positions 38, 39 and 40 in the anticodon stem and loop of transfer RNAs. This chain is tRNA pseudouridine synthase A, found in Shewanella baltica (strain OS185).